The primary structure comprises 248 residues: Pyridoxine 5'-phosphate synthase (248 aa).

3-amino-2-oxopropyl phosphate is bound by residues Asn8 and Arg19. His44 acts as the Proton acceptor in catalysis. 1-deoxy-D-xylulose 5-phosphate is bound by residues Arg46 and His51. The active-site Proton acceptor is the Glu76. Thr106 contributes to the 1-deoxy-D-xylulose 5-phosphate binding site. His200 acts as the Proton donor in catalysis. Residues Asp201 and 223 to 224 contribute to the 3-amino-2-oxopropyl phosphate site; that span reads GH.

It belongs to the PNP synthase family. As to quaternary structure, homooctamer; tetramer of dimers.

The protein localises to the cytoplasm. The catalysed reaction is 3-amino-2-oxopropyl phosphate + 1-deoxy-D-xylulose 5-phosphate = pyridoxine 5'-phosphate + phosphate + 2 H2O + H(+). It participates in cofactor biosynthesis; pyridoxine 5'-phosphate biosynthesis; pyridoxine 5'-phosphate from D-erythrose 4-phosphate: step 5/5. In terms of biological role, catalyzes the complicated ring closure reaction between the two acyclic compounds 1-deoxy-D-xylulose-5-phosphate (DXP) and 3-amino-2-oxopropyl phosphate (1-amino-acetone-3-phosphate or AAP) to form pyridoxine 5'-phosphate (PNP) and inorganic phosphate. The chain is Pyridoxine 5'-phosphate synthase from Chelativorans sp. (strain BNC1).